The chain runs to 414 residues: Glycogen synthase (414 aa).

Belongs to the glycosyltransferase group 1 family.

It catalyses the reaction [(1-&gt;4)-alpha-D-glucosyl](n) + UDP-alpha-D-glucose = [(1-&gt;4)-alpha-D-glucosyl](n+1) + UDP + H(+). The protein operates within glycan biosynthesis; glycogen biosynthesis. Glucosyltransferase that uses UDP-glucose as the sugar donor to elongate alpha-(1-&gt;4)-glucans. Is involved in the biosynthesis of both 6-O-methylglucosyl lipopolysaccharides (MGLP) and glycogen. May also use ADP-glucose as substrate. The polypeptide is Glycogen synthase (Mycobacterium tuberculosis (strain CDC 1551 / Oshkosh)).